Consider the following 152-residue polypeptide: Small ribosomal subunit protein uS13 (152 aa).

It belongs to the universal ribosomal protein uS13 family. Part of the 30S ribosomal subunit. Forms a loose heterodimer with protein S19. Forms two bridges to the 50S subunit in the 70S ribosome.

Its function is as follows. Located at the top of the head of the 30S subunit, it contacts several helices of the 16S rRNA. In the 70S ribosome it contacts the 23S rRNA (bridge B1a) and protein L5 of the 50S subunit (bridge B1b), connecting the 2 subunits; these bridges are implicated in subunit movement. The polypeptide is Small ribosomal subunit protein uS13 (Pyrobaculum aerophilum (strain ATCC 51768 / DSM 7523 / JCM 9630 / CIP 104966 / NBRC 100827 / IM2)).